Reading from the N-terminus, the 242-residue chain is Segregation and condensation protein A (242 aa).

It belongs to the ScpA family. As to quaternary structure, component of a cohesin-like complex composed of ScpA, ScpB and the Smc homodimer, in which ScpA and ScpB bind to the head domain of Smc. The presence of the three proteins is required for the association of the complex with DNA.

It localises to the cytoplasm. Its function is as follows. Participates in chromosomal partition during cell division. May act via the formation of a condensin-like complex containing Smc and ScpB that pull DNA away from mid-cell into both cell halves. The polypeptide is Segregation and condensation protein A (Streptococcus pneumoniae (strain Taiwan19F-14)).